The sequence spans 766 residues: Dipeptidyl peptidase 4 (766 aa).

The Cytoplasmic portion of the chain corresponds to Met-1–Lys-6. A helical; Signal-anchor for type II membrane protein transmembrane segment spans residues Val-7 to Leu-28. Over Asn-29–Pro-766 the chain is Extracellular. N-linked (GlcNAc...) asparagine glycosylation is found at Asn-85, Asn-92, Asn-150, Asn-219, Asn-229, Asn-281, and Asn-321. 4 cysteine pairs are disulfide-bonded: Cys-328-Cys-339, Cys-385-Cys-394, Cys-444-Cys-447, and Cys-454-Cys-472. N-linked (GlcNAc...) asparagine glycosylation is present at Asn-520. Ser-630 functions as the Charge relay system in the catalytic mechanism. A disulfide bond links Cys-649 and Cys-762. N-linked (GlcNAc...) asparagine glycosylation is present at Asn-685. Residues Asp-708 and His-740 each act as charge relay system in the active site.

It belongs to the peptidase S9B family. DPPIV subfamily. As to quaternary structure, monomer. Homodimer. Heterodimer with Seprase (FAP). Requires homodimerization for optimal dipeptidyl peptidase activity and T-cell costimulation. Found in a membrane raft complex, at least composed of BCL10, CARD11, DPP4 and IKBKB. Associates with collagen. Interacts with PTPRC; the interaction is enhanced in an interleukin-12-dependent manner in activated lymphocytes. Interacts (via extracellular domain) with ADA; does not inhibit its dipeptidyl peptidase activity. Interacts with CAV1 (via the N-terminus); the interaction is direct. Interacts (via cytoplasmic tail) with CARD11 (via PDZ domain); its homodimerization is necessary for interaction with CARD11. Interacts with IGF2R; the interaction is direct. Interacts with GPC3. Interacts with human coronavirus-EMC spike protein and acts as a receptor for this virus. (Microbial infection) Interacts with MERS coronavirus/MERS-CoV spike protein. In terms of processing, the soluble form (Dipeptidyl peptidase 4 soluble form also named SDPP) derives from the membrane form (Dipeptidyl peptidase 4 membrane form also named MDPP) by proteolytic processing. Post-translationally, N- and O-Glycosylated. Phosphorylated. Mannose 6-phosphate residues in the carbohydrate moiety are necessary for interaction with IGF2R in activated T-cells. Mannose 6-phosphorylation is induced during T-cell activation. In terms of tissue distribution, expressed specifically in lymphatic vessels but not in blood vessels in the skin, small intestine, esophagus, ovary, breast and prostate glands. Not detected in lymphatic vessels in the lung, kidney, uterus, liver and stomach (at protein level). Expressed in the poorly differentiated crypt cells of the small intestine as well as in the mature villous cells. Expressed at very low levels in the colon.

It localises to the secreted. The protein resides in the cell membrane. The protein localises to the apical cell membrane. It is found in the cell projection. Its subcellular location is the invadopodium membrane. It localises to the lamellipodium membrane. The protein resides in the cell junction. The protein localises to the membrane raft. The catalysed reaction is Release of an N-terminal dipeptide, Xaa-Yaa-|-Zaa-, from a polypeptide, preferentially when Yaa is Pro, provided Zaa is neither Pro nor hydroxyproline.. Inhibited by GPC3 and diprotin A. Its function is as follows. Cell surface glycoprotein receptor involved in the costimulatory signal essential for T-cell receptor (TCR)-mediated T-cell activation. Acts as a positive regulator of T-cell coactivation, by binding at least ADA, CAV1, IGF2R, and PTPRC. Its binding to CAV1 and CARD11 induces T-cell proliferation and NF-kappa-B activation in a T-cell receptor/CD3-dependent manner. Its interaction with ADA also regulates lymphocyte-epithelial cell adhesion. In association with FAP is involved in the pericellular proteolysis of the extracellular matrix (ECM), the migration and invasion of endothelial cells into the ECM. May be involved in the promotion of lymphatic endothelial cells adhesion, migration and tube formation. When overexpressed, enhanced cell proliferation, a process inhibited by GPC3. Also acts as a serine exopeptidase with a dipeptidyl peptidase activity that regulates various physiological processes by cleaving peptides in the circulation, including many chemokines, mitogenic growth factors, neuropeptides and peptide hormones such as brain natriuretic peptide 32. Removes N-terminal dipeptides sequentially from polypeptides having unsubstituted N-termini provided that the penultimate residue is proline. In terms of biological role, (Microbial infection) Acts as a receptor for human coronavirus MERS-CoV-2. This Homo sapiens (Human) protein is Dipeptidyl peptidase 4.